Consider the following 511-residue polypeptide: Histidine ammonia-lyase (511 aa).

The segment at residues 142–144 (ASG) is a cross-link (5-imidazolinone (Ala-Gly)). 2,3-didehydroalanine (Ser) is present on Ser-143.

The protein belongs to the PAL/histidase family. Post-translationally, contains an active site 4-methylidene-imidazol-5-one (MIO), which is formed autocatalytically by cyclization and dehydration of residues Ala-Ser-Gly.

It is found in the cytoplasm. The catalysed reaction is L-histidine = trans-urocanate + NH4(+). It functions in the pathway amino-acid degradation; L-histidine degradation into L-glutamate; N-formimidoyl-L-glutamate from L-histidine: step 1/3. This is Histidine ammonia-lyase from Brucella suis biovar 1 (strain 1330).